We begin with the raw amino-acid sequence, 289 residues long: YLVNPAGYAALGAYMFLLILIGSPVNFLTLYVTLEHKKLRTPLNYILLNLAVADLFMVLGGFTTTMYTSMHGYSVLGRLGCILEGFFATLGGEIALWSLVVLAIERWIVVCKPISNFRFTEDHAIMGLAFSWVMALACAVPPLVGWSRYIPEGMQCSCGVDYYTRAEGFNNESFVIYMFIVHFLIPLSVIFFCYGRLLCAVKEAAAAQQESETTQRPEKEVTRMVVIMVIAFLVCCLPNASVAWWIFCNQGSDFGPIFMTLPSFFAKSAAIYNPMIYICMNKQFRHCMI.

The Extracellular segment spans residues Tyr-1–Gly-7. Residues Tyr-8–Val-32 form a helical membrane-spanning segment. Over Thr-33–Asn-44 the chain is Cytoplasmic. A helical transmembrane segment spans residues Tyr-45–Tyr-67. Topologically, residues Thr-68–Cys-81 are extracellular. Residues Cys-81 and Cys-158 are joined by a disulfide bond. A helical transmembrane segment spans residues Ile-82 to Ile-104. The short motif at Glu-105–Trp-107 is the 'Ionic lock' involved in activated form stabilization element. Residues Glu-105–His-123 are Cytoplasmic-facing. Residues Ala-124–Val-144 traverse the membrane as a helical segment. The Extracellular portion of the chain corresponds to Gly-145–Ser-173. Residue Asn-171 is glycosylated (N-linked (GlcNAc...) asparagine). A helical transmembrane segment spans residues Phe-174–Gly-195. Over Arg-196–Arg-223 the chain is Cytoplasmic. A helical transmembrane segment spans residues Met-224–Trp-245. Residues Ile-246–Ile-257 lie on the Extracellular side of the membrane. The chain crosses the membrane as a helical span at residues Phe-258–Cys-279. Lys-267 carries the post-translational modification N6-(retinylidene)lysine. Over Met-280–Ile-289 the chain is Cytoplasmic.

It belongs to the G-protein coupled receptor 1 family. Opsin subfamily. In terms of processing, phosphorylated on some or all of the serine and threonine residues present in the C-terminal region. Contains one covalently linked retinal chromophore.

It localises to the membrane. It is found in the cell projection. The protein resides in the cilium. Its subcellular location is the photoreceptor outer segment. In terms of biological role, photoreceptor required for image-forming vision at low light intensity. While most salt water fish species use retinal as chromophore, most freshwater fish use 3-dehydroretinal, or a mixture of retinal and 3-dehydroretinal. Light-induced isomerization of 11-cis to all-trans retinal triggers a conformational change that activates signaling via G-proteins. Subsequent receptor phosphorylation mediates displacement of the bound G-protein alpha subunit by arrestin and terminates signaling. The chain is Rhodopsin (rho) from Limnocottus bergianus.